Consider the following 125-residue polypeptide: Protein ApaG (125 aa).

In terms of domain architecture, ApaG spans 1–125 (MINSPRVCIQ…FRLAVPTLIH (125 aa)).

The sequence is that of Protein ApaG from Salmonella arizonae (strain ATCC BAA-731 / CDC346-86 / RSK2980).